A 252-amino-acid chain; its full sequence is Geranylgeranylglyceryl phosphate synthase (252 aa).

D27 and S56 together coordinate Mg(2+). Sn-glycerol 1-phosphate-binding positions include 175 to 181, 206 to 207, and 228 to 229; these read YLEAGSG, GG, and GT.

The protein belongs to the GGGP/HepGP synthase family. Group II subfamily. Mg(2+) is required as a cofactor.

It is found in the cytoplasm. The enzyme catalyses sn-glycerol 1-phosphate + (2E,6E,10E)-geranylgeranyl diphosphate = sn-3-O-(geranylgeranyl)glycerol 1-phosphate + diphosphate. The protein operates within membrane lipid metabolism; glycerophospholipid metabolism. Prenyltransferase that catalyzes the transfer of the geranylgeranyl moiety of geranylgeranyl diphosphate (GGPP) to the C3 hydroxyl of sn-glycerol-1-phosphate (G1P). This reaction is the first ether-bond-formation step in the biosynthesis of archaeal membrane lipids. The protein is Geranylgeranylglyceryl phosphate synthase of Pyrococcus abyssi (strain GE5 / Orsay).